A 310-amino-acid polypeptide reads, in one-letter code: HPr kinase/phosphorylase (310 aa).

His138 is a binding site for Mg(2+). 153–160 contacts ATP; the sequence is GKSGVGKS. Residue Lys159 is part of the active site. Mg(2+) is bound at residue Ser160. The active-site Proton acceptor; for phosphorylation activity. Proton donor; for dephosphorylation activity is Asp177. Residues 201–210 form an important for the catalytic mechanism of both phosphorylation and dephosphorylation region; the sequence is LEIRGLGIIN. Glu202 lines the Mg(2+) pocket. Arg243 is an active-site residue. The tract at residues 264–269 is important for the catalytic mechanism of dephosphorylation; that stretch reads PVRPGR.

It belongs to the HPrK/P family. As to quaternary structure, homohexamer. The cofactor is Mg(2+). Requires Ca(2+) as cofactor.

It carries out the reaction [HPr protein]-L-serine + ATP = [HPr protein]-O-phospho-L-serine + ADP + H(+). The enzyme catalyses [HPr protein]-O-phospho-L-serine + phosphate + H(+) = [HPr protein]-L-serine + diphosphate. Is active as a kinase only at high ATP concentrations or at low ATP concentrations in the presence of the allosteric activator fructose 1,6-bisphosphate (FBP). The pyrophosphate-dependent HPr phosphorylation is not stimulated by FBP. Kinase activity is inhibited by inorganic phosphate (Pi). Dephosphorylation of HPr(Ser-P) by B.subtilis HPrK/P becomes prevalent when the concentration of Pi increases. Thus, the kinase activity may prevail under conditions of good nutrient supply, whereas the phosphorylase activity is dominant if carbon and energy sources become limiting. Its function is as follows. Catalyzes the ATP- as well as the pyrophosphate-dependent phosphorylation of 'Ser-45' in HPr, a phosphocarrier protein of the phosphoenolpyruvate-dependent sugar phosphotransferase system (PTS). HprK/P also catalyzes the pyrophosphate-producing, inorganic phosphate-dependent dephosphorylation (phosphorolysis) of seryl-phosphorylated HPr (P-Ser-HPr). The two antagonistic activities of HprK/P are regulated by several intracellular metabolites, which change their concentration in response to the absence or presence of rapidly metabolisable carbon sources (glucose, fructose, etc.) in the growth medium. Also phosphorylates/dephosphorylates the HPr-like catabolite repression protein crh on 'Ser-46'. Therefore, by controlling the phosphorylation state of HPr and crh, HPrK/P is a sensor enzyme that plays a major role in the regulation of carbon metabolism and sugar transport: it mediates carbon catabolite repression (CCR), and regulates PTS-catalyzed carbohydrate uptake and inducer exclusion. The chain is HPr kinase/phosphorylase (hprK) from Bacillus subtilis (strain 168).